Here is a 333-residue protein sequence, read N- to C-terminus: 4-hydroxyproline epimerase (333 aa).

Cys90 serves as the catalytic Proton acceptor. Residues 91 to 92 and Asp249 each bind substrate; that span reads GH. The Proton donor role is filled by Cys253. 254–255 contributes to the substrate binding site; the sequence is GT.

It belongs to the proline racemase family. In terms of assembly, homodimer.

It carries out the reaction trans-4-hydroxy-L-proline = cis-4-hydroxy-D-proline. Functionally, allows intracellular utilization of 4-hydroxyproline, one of the major constituents of host collagen, by converting 4-hydroxy-L-proline to 4-hydroxy-D-proline, which can be further metabolized by intracellular 4-hydroxy-D-proline oxidases. Strong B-cell mitogen. Plays an important role in the regulation of intra- and extracellular amino acid pools, allowing the bacterium to profit from host precursors and enzymatic pathways. This chain is 4-hydroxyproline epimerase, found in Brucella canis (strain ATCC 23365 / NCTC 10854 / RM-666).